Consider the following 455-residue polypeptide: UDP-N-acetylmuramoylalanine--D-glutamate ligase (455 aa).

Position 117-123 (Gly117–Thr123) interacts with ATP.

The protein belongs to the MurCDEF family.

It localises to the cytoplasm. The catalysed reaction is UDP-N-acetyl-alpha-D-muramoyl-L-alanine + D-glutamate + ATP = UDP-N-acetyl-alpha-D-muramoyl-L-alanyl-D-glutamate + ADP + phosphate + H(+). It participates in cell wall biogenesis; peptidoglycan biosynthesis. Functionally, cell wall formation. Catalyzes the addition of glutamate to the nucleotide precursor UDP-N-acetylmuramoyl-L-alanine (UMA). In Pelotomaculum thermopropionicum (strain DSM 13744 / JCM 10971 / SI), this protein is UDP-N-acetylmuramoylalanine--D-glutamate ligase.